We begin with the raw amino-acid sequence, 443 residues long: Protoheme IX farnesyltransferase, mitochondrial (443 aa).

7 helical membrane-spanning segments follow: residues 174–194 (AAGFALAPGPFDWPCFLLTSV), 235–255 (LAVSFATCCAVPGVAILTLGV), 257–277 (PLTGALGLFNIFLYTCCYTPL), 280–300 (ISIANTWVGAVVGAIPPVMGW), 309–329 (AGAFLLGGILYSWQFPHFNAL), 364–384 (LLVLSAAAPVLDITTWTFPIM), and 411–431 (LFFCSLWHLPLLLLLMLTCKR).

It belongs to the UbiA prenyltransferase family.

Its subcellular location is the mitochondrion membrane. It catalyses the reaction heme b + (2E,6E)-farnesyl diphosphate + H2O = Fe(II)-heme o + diphosphate. In terms of biological role, converts protoheme IX and farnesyl diphosphate to heme O. This Pongo abelii (Sumatran orangutan) protein is Protoheme IX farnesyltransferase, mitochondrial (COX10).